The primary structure comprises 308 residues: U-box domain-containing protein 54 (308 aa).

A disordered region spans residues 172–235 (FSEFSTSAEK…NESDEDPRLE (64 aa)). Over residues 210-227 (ESPKKGRKETIEKSKSNE) the composition is skewed to basic and acidic residues. One can recognise a U-box domain in the interval 232 to 306 (PRLEDFKCPI…KDWLEKNPNY (75 aa)).

It carries out the reaction S-ubiquitinyl-[E2 ubiquitin-conjugating enzyme]-L-cysteine + [acceptor protein]-L-lysine = [E2 ubiquitin-conjugating enzyme]-L-cysteine + N(6)-ubiquitinyl-[acceptor protein]-L-lysine.. The protein operates within protein modification; protein ubiquitination. In terms of biological role, functions as an E3 ubiquitin ligase. In Arabidopsis thaliana (Mouse-ear cress), this protein is U-box domain-containing protein 54 (PUB54).